Here is a 571-residue protein sequence, read N- to C-terminus: MRTSNYLLSTLKETPNDAEVVSHQLMLRAGMIRKLASGLYTWLPTGLRVLRKVENIVRQEIDNAGAVETLMPVVQPFELWEETGRSEKMGPELLRFTDRHVRPFVLSPTAEEVITSLVRNEVSSYKQLPLNLYQIQTKFRDERRPRFGVMRAREFCMMDAYSFDIDKAGLEKSYQAMHDAYCKAFDRMGLEYRPVLADSGAIGGSGSQEFHVLADSGEDLIAFSTESDYAANIEKAEALAPAVERAEPTQEMTLVDTPNAKTIAELVEQHGLPIEKTVKTLFVKASDEIDAPIIALIVRGDHELNEVKAENLPQVASPLEMASEEEIRELIGAGPGSLGPVGLELPFIVDRSVAVMSDFGAGANIDGKHYFGINWGRDVELGQVEDLRNVVEGDPSPCGKGTLMLKRGIEVGHIFQLGNVYSEAMNCSVLGPDGKNVILEMGCYGIGVSRVVASAIEQNHDKYGIIWPDAIAPFQVAIVPMNMHKSERVKEAAEKLYAELTAMGIEVLFDDRKERPGVMFSDIELIGIPHTIVIGDRSMDEGNFEYKNRRTGEKTPVAMADIVEHVKSQLK.

The protein belongs to the class-II aminoacyl-tRNA synthetase family. ProS type 1 subfamily. Homodimer.

The protein resides in the cytoplasm. The enzyme catalyses tRNA(Pro) + L-proline + ATP = L-prolyl-tRNA(Pro) + AMP + diphosphate. Its function is as follows. Catalyzes the attachment of proline to tRNA(Pro) in a two-step reaction: proline is first activated by ATP to form Pro-AMP and then transferred to the acceptor end of tRNA(Pro). As ProRS can inadvertently accommodate and process non-cognate amino acids such as alanine and cysteine, to avoid such errors it has two additional distinct editing activities against alanine. One activity is designated as 'pretransfer' editing and involves the tRNA(Pro)-independent hydrolysis of activated Ala-AMP. The other activity is designated 'posttransfer' editing and involves deacylation of mischarged Ala-tRNA(Pro). The misacylated Cys-tRNA(Pro) is not edited by ProRS. The polypeptide is Proline--tRNA ligase (Vibrio parahaemolyticus serotype O3:K6 (strain RIMD 2210633)).